The primary structure comprises 150 residues: Protein A151R (150 aa).

The protein belongs to the asfivirus A151R family. In terms of assembly, monomer. Homodimer. Interacts with protein B119L. Interacts with membrane protein E248R. Requires Zn(2+) as cofactor.

May participate in a redox cascade for the formation of disulfide bonds in viral proteins. The sequence is that of Protein A151R from African swine fever virus (isolate Pig/Kenya/KEN-50/1950) (ASFV).